The sequence spans 242 residues: Biosynthetic peptidoglycan transglycosylase (242 aa).

Residues 12-32 (LLLWLIALSVLLVLLLRWVPP) form a helical membrane-spanning segment.

This sequence belongs to the glycosyltransferase 51 family.

It is found in the cell inner membrane. The enzyme catalyses [GlcNAc-(1-&gt;4)-Mur2Ac(oyl-L-Ala-gamma-D-Glu-L-Lys-D-Ala-D-Ala)](n)-di-trans,octa-cis-undecaprenyl diphosphate + beta-D-GlcNAc-(1-&gt;4)-Mur2Ac(oyl-L-Ala-gamma-D-Glu-L-Lys-D-Ala-D-Ala)-di-trans,octa-cis-undecaprenyl diphosphate = [GlcNAc-(1-&gt;4)-Mur2Ac(oyl-L-Ala-gamma-D-Glu-L-Lys-D-Ala-D-Ala)](n+1)-di-trans,octa-cis-undecaprenyl diphosphate + di-trans,octa-cis-undecaprenyl diphosphate + H(+). It functions in the pathway cell wall biogenesis; peptidoglycan biosynthesis. In terms of biological role, peptidoglycan polymerase that catalyzes glycan chain elongation from lipid-linked precursors. The protein is Biosynthetic peptidoglycan transglycosylase of Stutzerimonas stutzeri (strain A1501) (Pseudomonas stutzeri).